A 570-amino-acid polypeptide reads, in one-letter code: Protein translocase subunit SecD (570 aa).

Residues 104-117 are compositionally biased toward polar residues; the sequence is GANATGTPSASETG. A disordered region spans residues 104 to 198; that stretch reads GANATGTPSA…SASASGDDAT (95 aa). Positions 122-146 are enriched in basic and acidic residues; it reads KATDKATDKATDKATDGDKATDGDK. Low complexity-rich tracts occupy residues 147–161 and 172–196; these read ASGT…SATS and ADPS…SGDD. 5 consecutive transmembrane segments (helical) span residues 370-390, 395-415, 419-439, 474-494, and 498-518; these read AGLI…LFYY, FIAV…MALL, IGFA…GITA, ILVS…VTVG, and GFAF…FLFT. Residues 540–570 are disordered; sequence LDPKALGAKPPLRRTRRPSRPAAGPVDPKEA.

Belongs to the SecD/SecF family. SecD subfamily. In terms of assembly, forms a complex with SecF. Part of the essential Sec protein translocation apparatus which comprises SecA, SecYEG and auxiliary proteins SecDF. Other proteins may also be involved.

Its subcellular location is the cell membrane. Part of the Sec protein translocase complex. Interacts with the SecYEG preprotein conducting channel. SecDF uses the proton motive force (PMF) to complete protein translocation after the ATP-dependent function of SecA. The chain is Protein translocase subunit SecD from Streptomyces coelicolor (strain ATCC BAA-471 / A3(2) / M145).